The sequence spans 141 residues: Hemoglobin subunit zeta (141 aa).

S1 is modified (N-acetylserine). Positions 1–141 (SLTKAERTII…VSGVLTEKYR (141 aa)) constitute a Globin domain. The residue at position 28 (T28) is a Phosphothreonine. Phosphoserine is present on S52. Heme b is bound at residue H58. Position 72 is a phosphoserine (S72). H87 contributes to the heme b binding site.

It belongs to the globin family. In terms of assembly, heterotetramer of two zeta chains and two epsilon chains.

Its function is as follows. The zeta chain is an alpha-type chain of mammalian embryonic hemoglobin. In Sus scrofa (Pig), this protein is Hemoglobin subunit zeta.